A 458-amino-acid polypeptide reads, in one-letter code: Peptidyl-prolyl cis-trans isomerase FKBP4 (458 aa).

Position 1 is an N-acetylmethionine; in peptidyl-prolyl cis-trans isomerase FKBP4; alternate (M1). T2 is subject to N-acetylthreonine; in peptidyl-prolyl cis-trans isomerase FKBP4, N-terminally processed; partial. Positions 50 to 138 constitute a PPIase FKBP-type 1 domain; that stretch reads GDRVFVHYTG…VFEVELFEFK (89 aa). The residue at position 143 (T143) is a Phosphothreonine; by CK2. The 87-residue stretch at 167–253 folds into the PPIase FKBP-type 2 domain; that stretch reads GAMVEVALEG…RYEVHLKSFE (87 aa). At Y220 the chain carries Phosphotyrosine. An interaction with tubulin region spans residues 267-400; it reads LEQSNIVKER…TQLAVCQQRT (134 aa). 3 TPR repeats span residues 270-303, 319-352, and 353-386; these read SNIV…LEYE, LASH…DSNN, and EKGL…YPSN. The residue at position 282 (K282) is an N6-acetyllysine. R373 bears the Omega-N-methylarginine mark. Residues 423–458 are disordered; the sequence is HKAKTEVAAGDHPTDAEMKGEPNNVAGNQAQVKTEA. T436 is subject to Phosphothreonine. A Glycyl lysine isopeptide (Lys-Gly) (interchain with G-Cter in SUMO1) cross-link involves residue K441. Over residues 447 to 458 the composition is skewed to polar residues; that stretch reads VAGNQAQVKTEA.

As to quaternary structure, homodimer. Interacts with GLMN. Associates with HSP90AA1 and HSP70 in steroid hormone receptor complexes. Also interacts with peroxisomal phytanoyl-CoA alpha-hydroxylase (PHYH). Interacts with NR3C1 and dynein. Interacts with HSF1 in the HSP90 complex. Associates with tubulin. Interacts with MAPT/TAU. Interacts (via TPR domain) with S100A1, S100A2 and S100A6; the interaction is Ca(2+) dependent. Interaction with S100A1 and S100A2 (but not with S100A6) leads to inhibition of FKBP4-HSP90 interaction. Interacts with dynein; causes partially NR3C1 transport to the nucleus. Post-translationally, phosphorylation by CK2 results in loss of HSP90 binding activity. Widely detected in the brain (at protein level).

It is found in the cytoplasm. The protein resides in the cytosol. Its subcellular location is the mitochondrion. It localises to the nucleus. The protein localises to the cytoskeleton. It is found in the cell projection. The protein resides in the axon. The enzyme catalyses [protein]-peptidylproline (omega=180) = [protein]-peptidylproline (omega=0). Its activity is regulated as follows. Inhibited by FK506. Functionally, immunophilin protein with PPIase and co-chaperone activities. Component of unligated steroid receptors heterocomplexes through interaction with heat-shock protein 90 (HSP90). Plays a role in the intracellular trafficking of heterooligomeric forms of steroid hormone receptors between cytoplasm and nuclear compartments. May have a protective role against oxidative stress in mitochondria. Also acts as a regulator of microtubule dynamics by inhibiting MAPT/TAU ability to promote microtubule assembly. The PPIase activity controls neuronal growth cones via regulation of TRPC1 channel opening. The protein is Peptidyl-prolyl cis-trans isomerase FKBP4 (Fkbp4) of Rattus norvegicus (Rat).